The sequence spans 464 residues: Arginine biosynthesis bifunctional protein ArgJ, chloroplastic (464 aa).

Thr208, Lys234, Thr245, Glu332, Asn459, and Thr464 together coordinate substrate. Residue Thr245 is the Nucleophile of the active site.

Belongs to the ArgJ family. As to quaternary structure, heterodimer of an alpha and a beta chain.

It is found in the plastid. Its subcellular location is the chloroplast. The catalysed reaction is N(2)-acetyl-L-ornithine + L-glutamate = N-acetyl-L-glutamate + L-ornithine. It catalyses the reaction L-glutamate + acetyl-CoA = N-acetyl-L-glutamate + CoA + H(+). It functions in the pathway amino-acid biosynthesis; L-arginine biosynthesis; L-ornithine and N-acetyl-L-glutamate from L-glutamate and N(2)-acetyl-L-ornithine (cyclic): step 1/1. It participates in amino-acid biosynthesis; L-arginine biosynthesis; N(2)-acetyl-L-ornithine from L-glutamate: step 1/4. Its function is as follows. Catalyzes two activities which are involved in the cyclic version of arginine biosynthesis: the synthesis of acetylglutamate from glutamate and acetyl-CoA, and of ornithine by transacetylation between acetylornithine and glutamate. This chain is Arginine biosynthesis bifunctional protein ArgJ, chloroplastic, found in Zea mays (Maize).